Reading from the N-terminus, the 510-residue chain is 2,3-bisphosphoglycerate-independent phosphoglycerate mutase (510 aa).

Residues D12 and S62 each contribute to the Mn(2+) site. The active-site Phosphoserine intermediate is the S62. Residues H123, 153 to 154, R185, R191, 260 to 263, and K335 each bind substrate; these read RD and RPDR. Residues D402, H406, D443, H444, and H461 each coordinate Mn(2+).

Belongs to the BPG-independent phosphoglycerate mutase family. As to quaternary structure, monomer. The cofactor is Mn(2+).

It catalyses the reaction (2R)-2-phosphoglycerate = (2R)-3-phosphoglycerate. The protein operates within carbohydrate degradation; glycolysis; pyruvate from D-glyceraldehyde 3-phosphate: step 3/5. Functionally, catalyzes the interconversion of 2-phosphoglycerate and 3-phosphoglycerate. The sequence is that of 2,3-bisphosphoglycerate-independent phosphoglycerate mutase from Listeria welshimeri serovar 6b (strain ATCC 35897 / DSM 20650 / CCUG 15529 / CIP 8149 / NCTC 11857 / SLCC 5334 / V8).